A 167-amino-acid chain; its full sequence is Pathogenesis-related protein PR-1 type (167 aa).

An N-terminal signal peptide occupies residues 1–29; the sequence is MAHNHWCNLFSVALVCVVALVMVQYSVAQ. An SCP domain is found at 36–155; sequence VDAHNAARSA…NGAWFITCNY (120 aa). Disulfide bonds link Cys-72/Cys-144, Cys-117/Cys-123, and Cys-139/Cys-153.

It belongs to the CRISP family.

Probably involved in the defense reaction of plants against pathogens. In Sambucus nigra (European elder), this protein is Pathogenesis-related protein PR-1 type.